Reading from the N-terminus, the 285-residue chain is NAD kinase (285 aa).

The active-site Proton acceptor is aspartate 66. Residues aspartate 66 to glycine 67, asparagine 137 to aspartate 138, arginine 148, arginine 165, aspartate 167, and threonine 178 to serine 183 contribute to the NAD(+) site.

This sequence belongs to the NAD kinase family. Requires a divalent metal cation as cofactor.

Its subcellular location is the cytoplasm. The enzyme catalyses NAD(+) + ATP = ADP + NADP(+) + H(+). Involved in the regulation of the intracellular balance of NAD and NADP, and is a key enzyme in the biosynthesis of NADP. Catalyzes specifically the phosphorylation on 2'-hydroxyl of the adenosine moiety of NAD to yield NADP. This chain is NAD kinase, found in Chlorobium luteolum (strain DSM 273 / BCRC 81028 / 2530) (Pelodictyon luteolum).